The primary structure comprises 913 residues: Protein translocase subunit SecA (913 aa).

Residues Gln-87, 105–109 (GEGKT), and Asp-512 each bind ATP. Zn(2+)-binding residues include Cys-897, Cys-899, Cys-908, and His-909.

This sequence belongs to the SecA family. As to quaternary structure, monomer and homodimer. Part of the essential Sec protein translocation apparatus which comprises SecA, SecYEG and auxiliary proteins SecDF-YajC and YidC. It depends on Zn(2+) as a cofactor.

The protein resides in the cell inner membrane. It is found in the cytoplasm. The enzyme catalyses ATP + H2O + cellular proteinSide 1 = ADP + phosphate + cellular proteinSide 2.. Part of the Sec protein translocase complex. Interacts with the SecYEG preprotein conducting channel. Has a central role in coupling the hydrolysis of ATP to the transfer of proteins into and across the cell membrane, serving both as a receptor for the preprotein-SecB complex and as an ATP-driven molecular motor driving the stepwise translocation of polypeptide chains across the membrane. In Pseudomonas fluorescens (strain ATCC BAA-477 / NRRL B-23932 / Pf-5), this protein is Protein translocase subunit SecA.